A 200-amino-acid polypeptide reads, in one-letter code: MASSSHNNLNAKLVLLGDMGAGKSSLVIRFVKGQFLEFQESTIGAAFFSSTLAVNNATVKFEIWDTAGQERYHSLAPMYYRGAAAAIIVYDITSSDSFARAKKWVQELQKQGNPNMVMALAGNKADLEDRRKVTAEEARLYAEENGLFFMETSAKTAVNVNAIFYEIAKRLPRAQPAQNPAGMVLVDRAAEGTRATSCCT.

Residues 17–25 (GDMGAGKSS), 36–42 (LEFQEST), 65–69 (DTAGQ), 123–126 (NKAD), and 153–155 (SAK) contribute to the GTP site. An Effector region motif is present at residues 39–47 (QESTIGAAF). Residues C198 and C199 are each lipidated (S-geranylgeranyl cysteine).

Belongs to the small GTPase superfamily. Rab family. As to expression, high in stem, root, and inflorescence.

Its subcellular location is the cell membrane. In terms of biological role, protein transport. Probably involved in vesicular traffic. This Nicotiana plumbaginifolia (Leadwort-leaved tobacco) protein is Ras-related protein RHN1 (RHN1).